The sequence spans 247 residues: Carboxy-S-adenosyl-L-methionine synthase (247 aa).

S-adenosyl-L-methionine is bound by residues Y39, 64 to 66 (GCS), 89 to 90 (DN), 117 to 118 (DI), N132, and R199.

Belongs to the class I-like SAM-binding methyltransferase superfamily. Cx-SAM synthase family. As to quaternary structure, homodimer.

The enzyme catalyses prephenate + S-adenosyl-L-methionine = carboxy-S-adenosyl-L-methionine + 3-phenylpyruvate + H2O. In terms of biological role, catalyzes the conversion of S-adenosyl-L-methionine (SAM) to carboxy-S-adenosyl-L-methionine (Cx-SAM). This is Carboxy-S-adenosyl-L-methionine synthase from Escherichia coli O7:K1 (strain IAI39 / ExPEC).